The chain runs to 336 residues: tRNA N6-adenosine threonylcarbamoyltransferase (336 aa).

Fe cation contacts are provided by H111, H115, and Y132. Substrate is bound by residues 132–136, D164, D185, and S264; that span reads YLSGG. D292 lines the Fe cation pocket.

This sequence belongs to the KAE1 / TsaD family. Fe(2+) serves as cofactor.

The protein localises to the cytoplasm. It catalyses the reaction L-threonylcarbamoyladenylate + adenosine(37) in tRNA = N(6)-L-threonylcarbamoyladenosine(37) in tRNA + AMP + H(+). Required for the formation of a threonylcarbamoyl group on adenosine at position 37 (t(6)A37) in tRNAs that read codons beginning with adenine. Is probably involved in the transfer of the threonylcarbamoyl moiety of threonylcarbamoyl-AMP (TC-AMP) to the N6 group of A37. The chain is tRNA N6-adenosine threonylcarbamoyltransferase from Sulfurisphaera tokodaii (strain DSM 16993 / JCM 10545 / NBRC 100140 / 7) (Sulfolobus tokodaii).